Here is a 290-residue protein sequence, read N- to C-terminus: BEL1-like homeodomain protein 11 (290 aa).

An SR/KY domain region spans residues 20–36 (SRYAKAVQCLVEEVIDI). Positions 81–152 (ENHEIHIKIT…SLEEAIISQL (72 aa)) are BELL domain. A DNA-binding region (homeobox) is located at residues 202–264 (AWKPIRGLPE…NARVRLWKPM (63 aa)).

This sequence belongs to the TALE/BELL homeobox family. May form heterodimeric complexes with TALE/KNOX proteins.

It localises to the nucleus. This is BEL1-like homeodomain protein 11 (BLH11) from Arabidopsis thaliana (Mouse-ear cress).